The following is a 570-amino-acid chain: Set1/Ash2 histone methyltransferase complex subunit ash-2 (570 aa).

The segment at 19-76 (TTVCYCDGKRELGSVEVVCSTCLKWFHGRCLKEFHELNSNGVPFMICYTFTCKQCRPT) adopts a PHD-type zinc-finger fold. Positions 201-242 (NREPRHIELPPIEGPKTRGASKRRHAEAPVTGKKQKLAADYS) are disordered. The region spanning 270–468 (PNVPEDPAWN…TLVEMPGSYI (199 aa)) is the B30.2/SPRY domain.

Component of the SET2 complex (also known as the SET1/COMPASS complex), which contains at least set-2, swd-2.1, cfp-1, rbbp-5, wdr-5.1, dpy-30 and ash-2. Within the complex, interacts with cfp-1 and wdr-5.1. As to expression, expressed in somatic and germline tissues (at protein level).

The protein localises to the nucleus. Functionally, component of the set-2/ash-2 histone methyltransferase (HMT) complex. Required for the di- and trimethylation at 'Lys-4' of histone H3, a mark associated with epigenetic transcriptional activation. Implicated in the epigenetic inheritance of lifespan over several generations. Functions as a transcriptional regulator. Acts in the germline to limit the longevity of the soma, probably by regulating a lipid metabolism pathway that signals from the germline to the intestine, thereby preventing accumulation of mono-unsaturated fatty acids. In Caenorhabditis elegans, this protein is Set1/Ash2 histone methyltransferase complex subunit ash-2.